A 370-amino-acid chain; its full sequence is Zinc finger protein 830 (370 aa).

Disordered stretches follow at residues 1–21 (MASS…QEEL) and 75–220 (HRER…LVPH). A2 bears the N-acetylalanine mark. Residues 16–40 (VNQEELRRLMKEKQRLSTNRKRIES) adopt a coiled-coil conformation. The C2H2-type zinc-finger motif lies at 53-75 (CALCNTPVKSELLWQTHVLGKQH). Residues 90 to 99 (QGPSAGTAPQ) show a composition bias toward polar residues. The segment covering 104-115 (KTTDVESQDAKK) has biased composition (basic and acidic residues). Residues 121–134 (DQVQPSTSASSANF) show a composition bias toward polar residues. Residues 156 to 171 (DYEEEEEEEEEEELGG) are compositionally biased toward acidic residues. A compositionally biased stretch (basic and acidic residues) spans 172–191 (GEERRDSSKHLPDAQGREHS). Residues 196–212 (RETTSNVLPNDPFNTNP) show a composition bias toward polar residues. S223 bears the Phosphoserine mark. Residues 310–338 (IECYRRVEKLRNRQDEIKNKLKEVLTIKE) are a coiled coil. A phosphoserine mark is found at S349 and S360.

In terms of assembly, component of the XAB2 complex, a multimeric protein complex composed of XAB2, PRPF19, AQR, ZNF830, ISY1, and PPIE; this complex binds preferentially to RNA. Interacts with XAB2. Identified in a pentameric intron-binding (IB) complex composed of AQR, XAB2, ISY1, ZNF830 and PPIE that is incorporated into the spliceosome as a preassembled complex. The IB complex does not contain PRPF19. In terms of processing, phosphorylated in response to DNA damage by the cell cycle checkpoint kinases ATR/ATM.

The protein localises to the nucleus. It is found in the chromosome. It localises to the nucleus speckle. May play a role in pre-mRNA splicing as component of the spliceosome. Acts as an important regulator of the cell cycle that participates in the maintenance of genome integrity. During cell cycle progression in embryonic fibroblast, prevents replication fork collapse, double-strand break formation and cell cycle checkpoint activation. Controls mitotic cell cycle progression and cell survival in rapidly proliferating intestinal epithelium and embryonic stem cells. During the embryo preimplantation, controls different aspects of M phase. During early oocyte growth, plays a role in oocyte survival by preventing chromosomal breaks formation, activation of TP63 and reduction of transcription. This Rattus norvegicus (Rat) protein is Zinc finger protein 830.